Consider the following 515-residue polypeptide: Maturase K (515 aa).

It belongs to the intron maturase 2 family. MatK subfamily.

Its subcellular location is the plastid. It localises to the chloroplast. In terms of biological role, usually encoded in the trnK tRNA gene intron. Probably assists in splicing its own and other chloroplast group II introns. In Zingiber officinale (Ginger), this protein is Maturase K.